A 1297-amino-acid polypeptide reads, in one-letter code: Regulator of V-ATPase in vacuolar membrane protein 1 (1297 aa).

2 stretches are compositionally biased toward basic and acidic residues: residues 1161-1171 (DQEIHENKDSQ) and 1260-1269 (AVEKTHDSPK). Disordered stretches follow at residues 1161-1182 (DQEI…VRNK) and 1260-1297 (AVEK…FSFE).

Component of the RAVE complex composed of rav1, rav2 and skp1. Interacts with vam2.

Its subcellular location is the cytoplasm. The protein resides in the nucleus. The protein localises to the endomembrane system. Component of the RAVE complex which is required for stable assembly of the vacuolar ATPase complex V-ATPase. This chain is Regulator of V-ATPase in vacuolar membrane protein 1 (rav1), found in Schizosaccharomyces pombe (strain 972 / ATCC 24843) (Fission yeast).